We begin with the raw amino-acid sequence, 262 residues long: Small ribosomal subunit protein eS4y (262 aa).

Residues leucine 42 to aspartate 104 form the S4 RNA-binding domain.

Belongs to the eukaryotic ribosomal protein eS4 family.

It is found in the cytoplasm. The sequence is that of Small ribosomal subunit protein eS4y (RPS4B) from Arabidopsis thaliana (Mouse-ear cress).